The following is a 437-amino-acid chain: MVLHYTPHQSAPRNTTFVAEILDLDYQGRGVAKVQGKTWFIENALPQEKVEVRIVDEKRHYGHGISCKILTPHPDRQSAKCAYYAQCGGCQSQHIPIDMQRQAKQQALFQRLQQLQPQATFMPMIVAAPWHYRRRVRLSVRFHPKSKQLAMGLRQRNTQQIVNLQHCDVLEIPLSQLLPKLHLLFSTWSLPKNLGHVELVHADNGIAMLLRHTGNLAQTDRTLLTNFAQQENLMLFVQDDQQITQLHGEAPYYILRDGTKLQFDIRDFIQVNAVVNQKMIDTALEWLELTSNDNVLDLFCGMGNFTLPISRQVNQVVGIEGVGEMVEKAKRNAEQNQCDNVQFYQANLDQPFVQQHWASQHFNKILLDPPRTGAAFALHALCELGAEKILYVSCNPATLVRDTAILLQFNYRLKKVAMIDMFPNTGHLESISLFEKE.

The 59-residue stretch at 10–68 (SAPRNTTFVAEILDLDYQGRGVAKVQGKTWFIENALPQEKVEVRIVDEKRHYGHGISCK) folds into the TRAM domain. The [4Fe-4S] cluster site is built by C81, C87, C90, and C167. Positions 270, 299, 304, 320, 347, and 368 each coordinate S-adenosyl-L-methionine. C394 functions as the Nucleophile in the catalytic mechanism.

Belongs to the class I-like SAM-binding methyltransferase superfamily. RNA M5U methyltransferase family. RlmD subfamily.

The enzyme catalyses uridine(1939) in 23S rRNA + S-adenosyl-L-methionine = 5-methyluridine(1939) in 23S rRNA + S-adenosyl-L-homocysteine + H(+). In terms of biological role, catalyzes the formation of 5-methyl-uridine at position 1939 (m5U1939) in 23S rRNA. The sequence is that of 23S rRNA (uracil(1939)-C(5))-methyltransferase RlmD from Pasteurella multocida (strain Pm70).